The following is a 1014-amino-acid chain: MMRLSSYLRRFRWLVFTGWLLALVPAIYLAMTQSGKLTGGGFEVAGSQSLLVHDQLQEQYPDQGAVSLALVAAPRSDASYQDMNDAVALLRRIVSEFPGVSEVPNPTQLPPRPDRPYGVSLRLDDRNSVTSDVAKQLRTKVGIKGDQAGRTANGKVRLYVIGQGALSAAVAANSKHDIAEAERWNLPIILIVLLAVFGSLAAAAVPLALGVCTVVVTMGLVDLVSMHTIMSVFVTSTVSMFGIALAVDYSLFILMRFREELRSGRQPQEAVDAAMATSGLAVVLSGMTVIASLTGIYLINTAALKSMATGAILAVAIAMLASITLTPAALATFGRAAVKRSVLMHWSQRSECTQSLFWTRWVGWVMHRPWISASAASTILIIMATPVTSMMLGNSLLRQFNSSHEIRAGVAAAAQALGPGALGPVQVLITFPDDPNTQASSPKHRQTIGAIRNRMLQAKNVMSVAPPQFADNNCSALLGAVLSVDPEDLGARETVDWMRTELPKVPGAAHVNVGGPTALINDFDDRVAKTEPLMLVFVALIAFVMLLISIRSVFLAFKGVLMTLLSVAAAYGSLVMVFQWGWLENLGFTHINSIDSTVPPLVLAMTFGLSMDYEIFLLTRIRERFLQTGHTRDAVAYGVSTSARTITSAALIMIAVFVGFAFAGMPLVAEIGVACAVAIAVDVTAVRLVLVPTLMAMFAQWNWWLPRWLSRALPAVDFDKPFPPVDLNEIVVLPADISATKVPCGDLRMVLKLAAKLKNLAPDAICVADPLAFTGCGRNNKRSDRVLPGAATQESEEDPAMGKASDSTAALTAAQVGPVTRTNGHWTARNLVIGLTHRNSITRVMPWSDRPVHPFTLWRSRFSVAIDALEAHIAVQADAPDQPNYQRCSPVETAHVQLPTGDRLLIPTGAETLRLVSYLIMCRNSIRDYAELADMVDAIEPETAAVVLTELDRYYSCQLPMRQWMATQLVRRLSDPHPVDLTEDQWSDPDNKAEWQDVRQRCLSVAVAMLEEAR.

Transmembrane regions (helical) follow at residues 13 to 33, 156 to 173, 188 to 208, 235 to 255, 279 to 299, 311 to 331, 373 to 393, 530 to 550, 560 to 580, 598 to 618, 649 to 669, and 671 to 691; these read WLVF…AMTQ, VRLY…VAAN, IILI…VPLA, TSTV…FILM, GLAV…IYLI, AILA…AALA, ASAA…MMLG, TEPL…LISI, VLMT…VFQW, VPPL…IFLL, AALI…PLVA, and IGVA…LVLV. A disordered region spans residues 783–802; that stretch reads SDRVLPGAATQESEEDPAMG.

This sequence belongs to the resistance-nodulation-cell division (RND) (TC 2.A.6) family. MmpL subfamily.

The protein localises to the cell membrane. The sequence is that of Probable transport protein MmpL11 (mmpL11) from Mycobacterium leprae (strain TN).